The following is a 583-amino-acid chain: Cysteine/serine-rich nuclear protein 1 (583 aa).

Disordered regions lie at residues 1-79 (MTGL…APRE) and 306-381 (AESL…RSGV). A compositionally biased stretch (low complexity) spans 18–41 (SSSSSSSFSSRLSLSSFPASSASP). Polar residues predominate over residues 54-69 (APQSDQDSCGLQSFTP). Low complexity predominate over residues 335–361 (PVSSELGDSSCSSDMTDSSTTLSSGSS). The segment covering 364-373 (PNHPAHPSLP) has biased composition (pro residues).

Belongs to the AXUD1 family. As to expression, widely expressed with highest levels in thymus and lung. Low levels detected in naive T-cells.

Its subcellular location is the nucleus. Binds to the consensus sequence 5'-AGAGTG-3' and has transcriptional activator activity. May have a tumor-suppressor function. May play a role in apoptosis. This Mus musculus (Mouse) protein is Cysteine/serine-rich nuclear protein 1 (Csrnp1).